Reading from the N-terminus, the 737-residue chain is Amino-acid acetyltransferase, mitochondrial (737 aa).

Residues 1-47 constitute a mitochondrion transit peptide; the sequence is MSRSTVLGWCTQSCRLLQKHDHSFSFPTFNGSPPLKKRRFCDSAAPA. The tract at residues 43–78 is disordered; sequence SAAPAAPRPSIHRPSEYIPHSKSGGEAPQDLGHKAR. Residues 558 to 727 enclose the N-acetyltransferase domain; that stretch reads GEPALTLDDP…YEGVCRAIEP (170 aa).

Belongs to the acetyltransferase family.

It is found in the mitochondrion. The catalysed reaction is L-glutamate + acetyl-CoA = N-acetyl-L-glutamate + CoA + H(+). It participates in amino-acid biosynthesis; L-arginine biosynthesis; N(2)-acetyl-L-ornithine from L-glutamate: step 1/4. Functionally, N-acetylglutamate synthase involved in arginine biosynthesis. This Coccidioides immitis (strain RS) (Valley fever fungus) protein is Amino-acid acetyltransferase, mitochondrial (ARG2).